The primary structure comprises 282 residues: N-acetylaspartate synthetase (282 aa).

A helical transmembrane segment spans residues 103–125 (FLTVMCYVMTKSFTLTFCAPFIL). Residues 110-269 (VMTKSFTLTF…RSPLERLFFQ (160 aa)) form the N-acetyltransferase domain.

Belongs to the NAT8 family.

Its subcellular location is the cytoplasm. The protein localises to the microsome membrane. It is found in the mitochondrion membrane. It localises to the endoplasmic reticulum membrane. It carries out the reaction L-aspartate + acetyl-CoA = N-acetyl-L-aspartate + CoA + H(+). Its function is as follows. Catalyzes the synthesis of N-acetylaspartate acid (NAA) from L-aspartate and acetyl-CoA. In Danio rerio (Zebrafish), this protein is N-acetylaspartate synthetase (nat8l).